A 592-amino-acid polypeptide reads, in one-letter code: Aspartate--tRNA ligase (592 aa).

E173 provides a ligand contact to L-aspartate. The tract at residues 197–200 (QLFK) is aspartate. R219 lines the L-aspartate pocket. ATP is bound by residues 219–221 (RDE) and Q228. H449 serves as a coordination point for L-aspartate. Residue E483 participates in ATP binding. R490 contributes to the L-aspartate binding site. 535-538 (GLDR) serves as a coordination point for ATP.

This sequence belongs to the class-II aminoacyl-tRNA synthetase family. Type 1 subfamily. In terms of assembly, homodimer.

The protein localises to the cytoplasm. The catalysed reaction is tRNA(Asp) + L-aspartate + ATP = L-aspartyl-tRNA(Asp) + AMP + diphosphate. In terms of biological role, catalyzes the attachment of L-aspartate to tRNA(Asp) in a two-step reaction: L-aspartate is first activated by ATP to form Asp-AMP and then transferred to the acceptor end of tRNA(Asp). This Shewanella loihica (strain ATCC BAA-1088 / PV-4) protein is Aspartate--tRNA ligase.